Here is a 34-residue protein sequence, read N- to C-terminus: Mytilin-A (34 aa).

Intrachain disulfides connect cysteine 2-cysteine 27, cysteine 6-cysteine 29, cysteine 10-cysteine 31, and cysteine 15-cysteine 34.

The protein localises to the secreted. Its function is as follows. Has antibacterial activity against A.viridans, B.megaterium, M.luteus, E.faecalis, S.aureus and E.coli. It is active against the marine species A.carrageenovora, P.alginovora and C.drobachiensis. The chain is Mytilin-A from Mytilus edulis (Blue mussel).